The sequence spans 83 residues: Colicin-E5 immunity protein (83 aa).

This protein is able to protect a cell, which harbors the plasmid ColE5 encoding colicin E5, against colicin E5. In Escherichia coli, this protein is Colicin-E5 immunity protein (imm).